Here is a 744-residue protein sequence, read N- to C-terminus: MSALAARRATAAAASPKPEQPESSIEEVSVSGALTLPSPKRRKTRQTSPKPRSKARYSDDVPTSRQFFQATESLAEQRTGRFSPSAPDSDGGTSSSSVGDSDEDMAQEDEFEDRREVDGERDQRKVSVAANMSSSGPFKSLDLMPVDITSQFNPKDNVNFCRITEGQLASAEMNDGHPGPGVIVSLARNESLTIAGLFLLTPLQNTLSIYSTALSPSMSSFPVYAPTSHPLPVISPASTQAPGKESDKTLLLIRENRCGIDGLRNGAVPGFSNIWLEDNGPWGLRGVHPVVGSFPVPVYPYCTPPSWSHAISSLSSSDVNLQTPFVGLVKGPKRSGKSTFARALLNNLLRRFRKVAWLECDLGQGEFGSGAVVGLWILDKPALGPPFTHPLLPSRSHYLGTYTPLTCPDEYLVAIRHLIEHYKYELQYTSEYSALHTTVHDKISTHVPLVINTQGWMKGLGEELLNVIESMAQPTRVFSFESQSEEVYSGQGWTSTPPWQATQLPYDPAYPTTEPVETEVTQTYSLETAPVSALQARYTPADLRVLSAITYFHASLHPTQSVPVTWDISSPLVCTIPWEVELGIGKALEKVYLIGEGSEGVLEEDLPIALNGAIVALAEMLGSYEDEPTVYEQGRSPPPTDLVNILGLAVIRSLSSGNSVNPGLKLQLLTPLPPSYLSRARILIKSGALELPLPGMIDWRRGGINEEGMLGKGWEEIPFLDVGGLDVIGGERRRFRKNIMRKGM.

Residues 1–14 (MSALAARRATAAAA) show a composition bias toward low complexity. Residues 1-131 (MSALAARRAT…DQRKVSVAAN (131 aa)) form a disordered region. Over residues 39-55 (PKRRKTRQTSPKPRSKA) the composition is skewed to basic residues. The span at 61–82 (VPTSRQFFQATESLAEQRTGRF) shows a compositional bias: polar residues. Low complexity predominate over residues 83-99 (SPSAPDSDGGTSSSSVG). Residues 100–111 (DSDEDMAQEDEF) show a composition bias toward acidic residues. A compositionally biased stretch (basic and acidic residues) spans 112–125 (EDRREVDGERDQRK). 331-338 (GPKRSGKS) contributes to the ATP binding site.

The protein belongs to the Clp1 family. NOL9/GRC3 subfamily.

It localises to the nucleus. The protein resides in the nucleolus. Its function is as follows. Polynucleotide 5'-kinase involved in rRNA processing. The polypeptide is Polynucleotide 5'-hydroxyl-kinase GRC3 (GRC3) (Cryptococcus neoformans var. neoformans serotype D (strain B-3501A) (Filobasidiella neoformans)).